Here is a 451-residue protein sequence, read N- to C-terminus: Tubulin gamma-1 chain (451 aa).

Ala142 to Gly148 contributes to the GTP binding site.

It belongs to the tubulin family.

The protein localises to the cytoplasm. It is found in the cytoskeleton. The protein resides in the microtubule organizing center. Its subcellular location is the centrosome. It localises to the spindle. Its function is as follows. Tubulin is the major constituent of microtubules. The gamma chain is found at microtubule organizing centers (MTOC) such as the spindle poles or the centrosome, suggesting that it is involved in the minus-end nucleation of microtubule assembly. The protein is Tubulin gamma-1 chain (tubg1) of Xenopus laevis (African clawed frog).